Here is a 195-residue protein sequence, read N- to C-terminus: Probable GTP-binding protein EngB (195 aa).

The EngB-type G domain maps to 24-195; that stretch reads GLTEVALSGR…EIWNFIETYI (172 aa). GTP-binding positions include 32 to 39, 59 to 63, 77 to 80, 144 to 147, and 176 to 178; these read GRSNVGKS, GKTQT, DVPG, TKED, and YSS. Mg(2+) is bound by residues serine 39 and threonine 61.

It belongs to the TRAFAC class TrmE-Era-EngA-EngB-Septin-like GTPase superfamily. EngB GTPase family. It depends on Mg(2+) as a cofactor.

Necessary for normal cell division and for the maintenance of normal septation. This Staphylococcus epidermidis (strain ATCC 35984 / DSM 28319 / BCRC 17069 / CCUG 31568 / BM 3577 / RP62A) protein is Probable GTP-binding protein EngB.